Reading from the N-terminus, the 78-residue chain is uncharacterized protein (78 aa).

Positions 20–78 (LQDLFPPHFGNEEADEDDEDGDKYGDDDGEFYGDNDGDNDGDNDGVNDGVGDGPPSTLL) are disordered. Acidic residues predominate over residues 31–64 (EEADEDDEDGDKYGDDDGEFYGDNDGDNDGDNDG).

This is an uncharacterized protein from Dictyostelium discoideum (Social amoeba).